We begin with the raw amino-acid sequence, 67 residues long: uncharacterized protein (67 aa).

This is an uncharacterized protein from Bacillus subtilis (strain 168).